The primary structure comprises 443 residues: Monooxygenase asqM (443 aa).

The protein belongs to the aromatic-ring hydroxylase family. It depends on FAD as a cofactor.

Its pathway is secondary metabolite biosynthesis. The protein operates within alkaloid biosynthesis. It functions in the pathway mycotoxin biosynthesis. Its function is as follows. Monooxygenase; part of the gene cluster that mediates the biosynthesis of the aspoquinolone mycotoxins. The role of asqM within the aspoquinolone pathway has still to be determined. The first step of the pathway is catalyzed by the nonribosomal peptide synthetase asqK that condenses anthranilic acid and O-methyl-L-tyrosine to produce 4'-methoxycyclopeptin. 4'-methoxycyclopeptin is then converted to 4'-methoxydehydrocyclopeptin by the ketoglutarate-dependent dioxygenase asqJ. AsqJ also converts its first product 4'-methoxydehydrocyclopeptin to 4'-methoxycyclopenin. The following conversion of 4'-methoxycyclopenin into 4'-methoxyviridicatin is catalyzed by the cyclopenase asqI. 4'-methoxyviridicatin is the precursor of quinolone natural products, and is further converted to quinolinone B. The prenyltransferase asqH1 then catalyzes the canonical Friedel-Crafts alkylation of quinolinone B with dimethylallyl cation to yield dimethylallyl quinolone, which is subjected to FAD-dependent dehydrogenation by the FAD-linked oxidoreductase asqF to yield conjugated aryl diene. The delta(3') double bond then serves as the site of the second alkylation with DMAPP catalyzed by the prenyltransferase asqH2 to yield a carbenium ion intermediate, which can be attacked by H(2)O to yield a styrenyl quinolone containing a C3'-hydroxyprenyl chain. The FAD-dependent monooxygenase asqG performs epoxidation of the terminal C7'-C8' olefin. Finally, after dehydratation of the epoxide at C3 by asqC, the quinolone epoxide rearrangement protein asqO catalyzes an enzymatic 3-exo-tet cyclization to yield the cyclopropyl-THF ring system in aspoquinolone. The sequence is that of Monooxygenase asqM from Emericella nidulans (strain FGSC A4 / ATCC 38163 / CBS 112.46 / NRRL 194 / M139) (Aspergillus nidulans).